Consider the following 630-residue polypeptide: DNA mismatch repair protein MutL (630 aa).

Over residues 398-408 (TQTNAFGSMAT) the composition is skewed to polar residues. Residues 398–425 (TQTNAFGSMATSRDSSRGSYSASESRQR) form a disordered region.

It belongs to the DNA mismatch repair MutL/HexB family.

Its function is as follows. This protein is involved in the repair of mismatches in DNA. It is required for dam-dependent methyl-directed DNA mismatch repair. May act as a 'molecular matchmaker', a protein that promotes the formation of a stable complex between two or more DNA-binding proteins in an ATP-dependent manner without itself being part of a final effector complex. The sequence is that of DNA mismatch repair protein MutL from Shewanella baltica (strain OS185).